Reading from the N-terminus, the 397-residue chain is Staphyloferrin A transporter (397 aa).

12 helical membrane passes run Phe10–Thr30, Ile39–Ala59, Leu67–Tyr87, Pro93–Val110, Phe137–Tyr157, Thr162–Phe182, Ile213–Val233, Ile245–Pro265, Ile271–Val292, Ile296–Ala313, Val333–Ile353, and Phe358–Phe378.

This sequence belongs to the major facilitator superfamily.

The protein resides in the cell membrane. Involved in staphyloferrin A secretion. In Staphylococcus aureus (strain NCTC 8325 / PS 47), this protein is Staphyloferrin A transporter.